The primary structure comprises 152 residues: Homeobox protein ceh-63 (152 aa).

The span at 21 to 30 (NDTNSSQQIK) shows a compositional bias: polar residues. 2 disordered regions span residues 21-48 (NDTN…RTTF) and 92-126 (RRTK…SQHV). Basic residues predominate over residues 35–44 (PPKRSNRPTK). A DNA-binding region (homeobox) is located at residues 41 to 100 (RPTKRTTFTSEQVTLLELEFAKNEYICKDRRGELAQTIELTECQVKTWFQNRRTKKRRCT). A compositionally biased stretch (polar residues) spans 116-126 (PSPQNPSSQHV).

May interact with homeobox protein ceh-14.

The protein resides in the nucleus. Functionally, probable transcription factor, modulating expression of helix-loop-helix protein mbr-1, perhaps acting in concert with homeobox protein ceh-14. May play a minor role in axon guidance in the DVC interneuron. This is Homeobox protein ceh-63 from Caenorhabditis elegans.